Consider the following 111-residue polypeptide: Large ribosomal subunit protein uL24 (111 aa).

The segment at 85–111 (NTNDPRRKDIINRKASRQKEEQGGKAQ) is disordered. Over residues 88 to 111 (DPRRKDIINRKASRQKEEQGGKAQ) the composition is skewed to basic and acidic residues.

Belongs to the universal ribosomal protein uL24 family. In terms of assembly, part of the 50S ribosomal subunit.

Functionally, one of two assembly initiator proteins, it binds directly to the 5'-end of the 23S rRNA, where it nucleates assembly of the 50S subunit. Located at the polypeptide exit tunnel on the outside of the subunit. This is Large ribosomal subunit protein uL24 from Metallosphaera sedula (strain ATCC 51363 / DSM 5348 / JCM 9185 / NBRC 15509 / TH2).